The primary structure comprises 859 residues: Protein EFR3 homolog (859 aa).

Disordered regions lie at residues 638-657 (DDPLSSTAVNGTIPEGTPRT) and 697-724 (RDGNGDSWQREDGQNFDSTDGRESPDGY). Positions 704–722 (WQREDGQNFDSTDGRESPD) are enriched in basic and acidic residues.

This sequence belongs to the EFR3 family.

This chain is Protein EFR3 homolog, found in Caenorhabditis briggsae.